We begin with the raw amino-acid sequence, 314 residues long: tRNA uridine(34) hydroxylase (314 aa).

The region spanning 140 to 234 (SRDDVILVDT…YLEETPAEES (95 aa)) is the Rhodanese domain. The active-site Cysteine persulfide intermediate is cysteine 194.

The protein belongs to the TrhO family.

It catalyses the reaction uridine(34) in tRNA + AH2 + O2 = 5-hydroxyuridine(34) in tRNA + A + H2O. Its function is as follows. Catalyzes oxygen-dependent 5-hydroxyuridine (ho5U) modification at position 34 in tRNAs. This Acinetobacter baylyi (strain ATCC 33305 / BD413 / ADP1) protein is tRNA uridine(34) hydroxylase.